The primary structure comprises 221 residues: Oxaloacetate tautomerase oaa1, mitochondrial (221 aa).

Mg(2+)-binding residues include E59, E61, and D93.

This sequence belongs to the FAH family. Mg(2+) is required as a cofactor. Mn(2+) serves as cofactor.

The protein localises to the mitochondrion. The protein resides in the cytoplasm. It carries out the reaction oxaloacetate = enol-oxaloacetate. Tautomerase that converts enol-oxaloacetate, a strong inhibitor of succinate dehydrogenase, to the physiological keto form of oxaloacetate. In Schizosaccharomyces pombe (strain 972 / ATCC 24843) (Fission yeast), this protein is Oxaloacetate tautomerase oaa1, mitochondrial.